The sequence spans 337 residues: Transaldolase (337 aa).

A Nuclear localization signal motif is present at residues 1 to 10 (MSSSPVKRQR). Position 115 is an N6-acetyllysine (Lys115). Lys142 (schiff-base intermediate with substrate) is an active-site residue. Position 219 is an N6-acetyllysine (Lys219). A phosphoserine mark is found at Ser237 and Ser256. N6-acetyllysine occurs at positions 269, 286, and 321.

It belongs to the transaldolase family. Type 1 subfamily. In terms of assembly, homodimer. Heterodimer with isoform 2. Interacts with KPNA1 and KPNA4.

It is found in the nucleus. Its subcellular location is the cytoplasm. The catalysed reaction is D-sedoheptulose 7-phosphate + D-glyceraldehyde 3-phosphate = D-erythrose 4-phosphate + beta-D-fructose 6-phosphate. Its pathway is carbohydrate degradation; pentose phosphate pathway; D-glyceraldehyde 3-phosphate and beta-D-fructose 6-phosphate from D-ribose 5-phosphate and D-xylulose 5-phosphate (non-oxidative stage): step 2/3. Functionally, catalyzes the rate-limiting step of the non-oxidative phase in the pentose phosphate pathway. Catalyzes the reversible conversion of sedheptulose-7-phosphate and D-glyceraldehyde 3-phosphate into erythrose-4-phosphate and beta-D-fructose 6-phosphate. Not only acts as a pentose phosphate pathway enzyme, but also affects other metabolite pathways by altering its subcellular localization between the nucleus and the cytoplasm. The protein is Transaldolase of Homo sapiens (Human).